We begin with the raw amino-acid sequence, 634 residues long: Tyrosine-protein kinase transforming protein erbB (634 aa).

The region spanning 132–399 (FKKVKVLGSG…KMARDPPRYL (268 aa)) is the Protein kinase domain. Residues 138–146 (LGSGAFGTV) and Lys165 each bind ATP. Asp257 serves as the catalytic Proton acceptor.

It belongs to the protein kinase superfamily. Tyr protein kinase family. EGF receptor subfamily.

The enzyme catalyses L-tyrosyl-[protein] + ATP = O-phospho-L-tyrosyl-[protein] + ADP + H(+). The polypeptide is Tyrosine-protein kinase transforming protein erbB (V-ERBB) (Avian leukosis virus (ALV)).